The chain runs to 494 residues: Cytochrome P450 2G1 (494 aa).

Cys439 lines the heme pocket.

This sequence belongs to the cytochrome P450 family. Requires heme as cofactor. As to expression, olfactory epithelium.

The protein localises to the endoplasmic reticulum membrane. The protein resides in the microsome membrane. It carries out the reaction an organic molecule + reduced [NADPH--hemoprotein reductase] + O2 = an alcohol + oxidized [NADPH--hemoprotein reductase] + H2O + H(+). Functionally, cytochromes P450 are a group of heme-thiolate monooxygenases. This isozyme seems to be implicated in olfaction. The polypeptide is Cytochrome P450 2G1 (CYP2G1) (Oryctolagus cuniculus (Rabbit)).